A 135-amino-acid chain; its full sequence is Putative pre-16S rRNA nuclease (135 aa).

The protein belongs to the YqgF nuclease family.

The protein localises to the cytoplasm. Its function is as follows. Could be a nuclease involved in processing of the 5'-end of pre-16S rRNA. The chain is Putative pre-16S rRNA nuclease from Clostridium novyi (strain NT).